Reading from the N-terminus, the 98-residue chain is NADH-ubiquinone oxidoreductase chain 4L (98 aa).

Transmembrane regions (helical) follow at residues 1–21 (MPVV…GLLI), 29–49 (SLLC…VTVL), and 61–81 (IILL…LVMV).

It belongs to the complex I subunit 4L family. In terms of assembly, core subunit of respiratory chain NADH dehydrogenase (Complex I) which is composed of 45 different subunits.

The protein resides in the mitochondrion inner membrane. The enzyme catalyses a ubiquinone + NADH + 5 H(+)(in) = a ubiquinol + NAD(+) + 4 H(+)(out). Functionally, core subunit of the mitochondrial membrane respiratory chain NADH dehydrogenase (Complex I) which catalyzes electron transfer from NADH through the respiratory chain, using ubiquinone as an electron acceptor. Part of the enzyme membrane arm which is embedded in the lipid bilayer and involved in proton translocation. The sequence is that of NADH-ubiquinone oxidoreductase chain 4L (MT-ND4L) from Ursus maritimus (Polar bear).